The primary structure comprises 211 residues: Thymidylate kinase (211 aa).

Position 10 to 17 (10 to 17 (GVEGCGKT)) interacts with ATP.

The protein belongs to the thymidylate kinase family.

The enzyme catalyses dTMP + ATP = dTDP + ADP. Its function is as follows. Phosphorylation of dTMP to form dTDP in both de novo and salvage pathways of dTTP synthesis. This Trichormus variabilis (strain ATCC 29413 / PCC 7937) (Anabaena variabilis) protein is Thymidylate kinase.